A 496-amino-acid chain; its full sequence is Alpha-amylase (496 aa).

Cys-29 and Cys-85 are disulfide-bonded. Ca(2+)-binding residues include Asn-99, Arg-155, and Asp-164. Arg-192 lines the chloride pocket. Catalysis depends on Asp-194, which acts as the Nucleophile. His-198 provides a ligand contact to Ca(2+). The active-site Proton donor is Glu-230. Residue Arg-332 participates in chloride binding. 2 disulfides stabilise this stretch: Cys-374/Cys-380 and Cys-448/Cys-460.

The protein belongs to the glycosyl hydrolase 13 family. In terms of assembly, monomer. It depends on Ca(2+) as a cofactor. Chloride is required as a cofactor. Post-translationally, disulfide bonds are present.

The protein localises to the secreted. The catalysed reaction is Endohydrolysis of (1-&gt;4)-alpha-D-glucosidic linkages in polysaccharides containing three or more (1-&gt;4)-alpha-linked D-glucose units.. With respect to regulation, inhibited by alpha-amylase inhibitors from wheat and rye. The most effective inhibitors are the wheat tetrameric alpha-amylase inhibitor (WTAI) and the rye dimeric alpha-amylase inhibitor (RDAI-1). Not inhibited by alpha-amylase inhibitor from barley. Its function is as follows. Aids in the digestion of starch and glycogen derived from food, such as skin scales, fungi and bacteria. This chain is Alpha-amylase, found in Dermatophagoides pteronyssinus (European house dust mite).